The sequence spans 509 residues: Anaerobic nitric oxide reductase flavorubredoxin (509 aa).

A zinc metallo-hydrolase region spans residues Leu30–Ile210. Fe cation-binding residues include His79, Glu81, Asp83, His147, Asp166, and His227. A Flavodoxin-like domain is found at Ile254 to Ala393. FMN-binding positions include Thr260–Asn264 and Ala342–Leu369. Residues Ser457–Ile508 form the Rubredoxin-like domain. Positions 462, 465, 495, and 498 each coordinate Fe cation.

In the N-terminal section; belongs to the zinc metallo-hydrolase group 3 family. In terms of assembly, homotetramer. Fe cation serves as cofactor. FMN is required as a cofactor.

The protein localises to the cytoplasm. Its pathway is nitrogen metabolism; nitric oxide reduction. Anaerobic nitric oxide reductase; uses NADH to detoxify nitric oxide (NO), protecting several 4Fe-4S NO-sensitive enzymes. Has at least 2 reductase partners, only one of which (NorW, flavorubredoxin reductase) has been identified. NO probably binds to the di-iron center; electrons enter from the NorW at rubredoxin and are transferred sequentially to the FMN center and the di-iron center. Also able to function as an aerobic oxygen reductase. This chain is Anaerobic nitric oxide reductase flavorubredoxin, found in Pectobacterium atrosepticum (strain SCRI 1043 / ATCC BAA-672) (Erwinia carotovora subsp. atroseptica).